The sequence spans 222 residues: GTP cyclohydrolase 1 (222 aa).

Zn(2+) contacts are provided by cysteine 111, histidine 114, and cysteine 182.

The protein belongs to the GTP cyclohydrolase I family. As to quaternary structure, toroid-shaped homodecamer, composed of two pentamers of five dimers.

The enzyme catalyses GTP + H2O = 7,8-dihydroneopterin 3'-triphosphate + formate + H(+). The protein operates within cofactor biosynthesis; 7,8-dihydroneopterin triphosphate biosynthesis; 7,8-dihydroneopterin triphosphate from GTP: step 1/1. With respect to regulation, allosteric enzyme. Activity is modulated by K(+), divalent cations, UTP, and tetrahydrobiopterin. Tetrahydrobiopterin is an inhibitor of this enzyme. This Salmonella typhi protein is GTP cyclohydrolase 1.